The following is a 452-amino-acid chain: Probable glycine dehydrogenase (decarboxylating) subunit 1 (452 aa).

Belongs to the GcvP family. N-terminal subunit subfamily. In terms of assembly, the glycine cleavage system is composed of four proteins: P, T, L and H. In this organism, the P 'protein' is a heterodimer of two subunits.

It carries out the reaction N(6)-[(R)-lipoyl]-L-lysyl-[glycine-cleavage complex H protein] + glycine + H(+) = N(6)-[(R)-S(8)-aminomethyldihydrolipoyl]-L-lysyl-[glycine-cleavage complex H protein] + CO2. Functionally, the glycine cleavage system catalyzes the degradation of glycine. The P protein binds the alpha-amino group of glycine through its pyridoxal phosphate cofactor; CO(2) is released and the remaining methylamine moiety is then transferred to the lipoamide cofactor of the H protein. In Nitrosospira multiformis (strain ATCC 25196 / NCIMB 11849 / C 71), this protein is Probable glycine dehydrogenase (decarboxylating) subunit 1.